The sequence spans 232 residues: 7-cyano-7-deazaguanine synthase (232 aa).

11–21 (ASGGMDSATAA) is a binding site for ATP. Zn(2+) is bound by residues Cys-192, Cys-200, Cys-203, and Cys-206.

The protein belongs to the QueC family. It depends on Zn(2+) as a cofactor.

The enzyme catalyses 7-carboxy-7-deazaguanine + NH4(+) + ATP = 7-cyano-7-deazaguanine + ADP + phosphate + H2O + H(+). It participates in purine metabolism; 7-cyano-7-deazaguanine biosynthesis. Functionally, catalyzes the ATP-dependent conversion of 7-carboxy-7-deazaguanine (CDG) to 7-cyano-7-deazaguanine (preQ(0)). The sequence is that of 7-cyano-7-deazaguanine synthase from Haloarcula marismortui (strain ATCC 43049 / DSM 3752 / JCM 8966 / VKM B-1809) (Halobacterium marismortui).